Consider the following 208-residue polypeptide: Uracil phosphoribosyltransferase (208 aa).

5-phospho-alpha-D-ribose 1-diphosphate-binding positions include R78, R103, and 130–138; that span reads DPMLATGGS. Residues I193 and 198–200 each bind uracil; that span reads GDA. D199 contacts 5-phospho-alpha-D-ribose 1-diphosphate.

Belongs to the UPRTase family. Mg(2+) is required as a cofactor.

The enzyme catalyses UMP + diphosphate = 5-phospho-alpha-D-ribose 1-diphosphate + uracil. The protein operates within pyrimidine metabolism; UMP biosynthesis via salvage pathway; UMP from uracil: step 1/1. Its activity is regulated as follows. Allosterically activated by GTP. Catalyzes the conversion of uracil and 5-phospho-alpha-D-ribose 1-diphosphate (PRPP) to UMP and diphosphate. In Histophilus somni (strain 129Pt) (Haemophilus somnus), this protein is Uracil phosphoribosyltransferase.